The chain runs to 247 residues: MNVLSYSINTLKGLYEISGVEVGQHFYWKIGGFQVHAQVLITSWVVIVILLGSAIVTVRNPQTIPTDGQNFFEYILEFIRDVSKTQIGEEYGPWVPFIGTLFLFIFVSNWSGALLPWKIIELPHGELAAPTNDINTTVALALLTSIAYFYAGLSKKGLGYFGKYIQPTPILLPINILEDFTKPLSLSFRLFGNILADELVVVVLVSLVPSVVPIPVMFLGLFTSGIQALIFATLAAAYIGESMEGHH.

The next 5 membrane-spanning stretches (helical) occupy residues 38-58, 95-115, 134-154, 199-219, and 220-240; these read QVLI…IVTV, VPFI…GALL, INTT…AGLS, LVVV…VMFL, and GLFT…AYIG.

Belongs to the ATPase A chain family. As to quaternary structure, F-type ATPases have 2 components, CF(1) - the catalytic core - and CF(0) - the membrane proton channel. CF(1) has five subunits: alpha(3), beta(3), gamma(1), delta(1), epsilon(1). CF(0) has four main subunits: a, b, b' and c.

The protein resides in the plastid. The protein localises to the chloroplast thylakoid membrane. Functionally, key component of the proton channel; it plays a direct role in the translocation of protons across the membrane. The sequence is that of ATP synthase subunit a, chloroplastic from Populus trichocarpa (Western balsam poplar).